Reading from the N-terminus, the 141-residue chain is Hemoglobin subunit alpha-1/2/3 (141 aa).

In terms of domain architecture, Globin spans 1–141; the sequence is VLSPADKTNV…VGTVLTSKYR (141 aa). Serine 3 is subject to Phosphoserine. Lysine 7 is modified (N6-succinyllysine). Threonine 8 bears the Phosphothreonine mark. At lysine 11 the chain carries N6-succinyllysine. Lysine 16 carries the N6-acetyllysine; alternate modification. Lysine 16 carries the post-translational modification N6-succinyllysine; alternate. The residue at position 24 (tyrosine 24) is a Phosphotyrosine. A Phosphoserine modification is found at serine 35. Residue lysine 40 is modified to N6-succinyllysine. Residue serine 49 is modified to Phosphoserine. Histidine 58 provides a ligand contact to O2. Heme b is bound at residue histidine 87. The residue at position 102 (serine 102) is a Phosphoserine. Position 108 is a phosphothreonine (threonine 108). Serine 124 and serine 131 each carry phosphoserine. Residues threonine 134 and threonine 137 each carry the phosphothreonine modification. Serine 138 carries the post-translational modification Phosphoserine.

This sequence belongs to the globin family. In terms of assembly, heterotetramer of two alpha chains and two beta chains. In terms of tissue distribution, red blood cells.

In terms of biological role, involved in oxygen transport from the lung to the various peripheral tissues. The polypeptide is Hemoglobin subunit alpha-1/2/3 (Macaca nemestrina (Pig-tailed macaque)).